The following is a 1022-amino-acid chain: MAFTNYSTLNRAQLTFDYLHTNSTTHAFLFGALAELIDNARDADATRIDIYAEKREDLQGGFMLCFLDNGVGMDPNDVINVIQFGKSAKRTPESTQIGRYGNGLKSGSMRIGKDFILFTKKENTMSCLFLSRTFHEEEGIDEVIVPLPTWNSQTREPVTDNMEKFAIETELIYKYSPFHTEEEVMTQFTKISGTSGTLVVIFNLKLTDNGEPELDVTSNPKDIRMAEISQEGVKPERHSFCAYAAVLYIDPRMRIFIHGHKVQTKKLCCCLYKPRKYTFTSHRFKTRAEQEVKKADQVAQLAEEKAREAESKARTLEIHMGGDITRDSRVMLRQVQNTAITLRREADVKKRIRDAKQQALKEPKELTFVFGVNIEHRDHDGMFIYNCSRLIKMYEKVGPQLEKGMVCGGVVGVIDVPYLVLEPTHNKQDFADAKEYRHLLRAMGEHLAQYWKDIEIAQHGIIKFWDEFGYLSANWNRPPSDELHFKRKRAMQVPTTIQCDLCLKWRTLPFQLSAVEEGYPINWVCSMNPDPEQDQCEAFELKQKIPLGILKKAPKTQEERQKQLTEKIQQEQRKLKALKKIKPIHSQSDLKKLPLEVTSRPFSKYPAHIFQGPQSSFHVVKTNARRRPQSRHAPFRQLQRSSIICTNPKPPFLVDKTEAVLLQPPETPQKSVSLLVKTIPQPPPLVQSLSPSVVPKSNNPWKVETPQIMNTPVAEMPYVPVNPSLVICDHKRSPEVSDEIEDEDRRKRMCKRGRFTVKKEKIQASELSDSSGEENPVDLKTAQKDKGLYVEVRMMGECYKGHVTAVEVGDNVVWWKVKFEDMPKDSTPRDCWVEKGSENVWLVKPSPEYQSTDEQQEDRKGEEDTVVQQALALQQTSTSECFCTEPDTTASTANHKTIDLLVQILWNCLHYFMPLSFPISKKELGAMNSEELLSLPLKECFKQYEVGLQNLCRSYQRCADSQAKVSEESLRISQKKLQETEEKLQKLRTNIQTLLQMAQQGINIRADDELDAYIEDLVSSDD.

Ala-2 is modified (N-acetylalanine). ATP is bound by residues Asn-39, Ser-87–Lys-89, and Arg-99–Lys-105. Asn-39 serves as a coordination point for Mg(2+). Residues Lys-285 to Glu-362 are a coiled coil. An ATP-binding site is contributed by Lys-427. Residues Ala-490–Lys-544 form a CW-type zinc finger. The Zn(2+) site is built by Cys-499, Cys-502, Cys-525, and Cys-536. The stretch at Lys-555 to Pro-583 forms a coiled coil. Ser-615 is modified (phosphoserine). Lys-649 participates in a covalent cross-link: Glycyl lysine isopeptide (Lys-Gly) (interchain with G-Cter in SUMO2). Phosphoserine is present on residues Ser-690, Ser-724, Ser-733, and Ser-737. A Glycyl lysine isopeptide (Lys-Gly) (interchain with G-Cter in SUMO2) cross-link involves residue Lys-758. Phosphoserine occurs at positions 768 and 770. Thr-827 is modified (phosphothreonine). Phosphoserine occurs at positions 846 and 851. Residue Lys-922 forms a Glycyl lysine isopeptide (Lys-Gly) (interchain with G-Cter in SUMO2) linkage. Residues Gln-962 to Gly-1001 adopt a coiled-coil conformation.

As to quaternary structure, interacts with Morc2a. As to expression, protein is abundant in testes but not detected in other adult tissues examined (at protein level). Detected in germ cells with a distinct developmental-specific expression pattern but not in somatic cells such as Sertoli cells.

The protein localises to the nucleus. It carries out the reaction ATP + H2O = ADP + phosphate + H(+). Required for chromosomal synapsis and meiotic recombination in males and females. This is ATPase MORC2B from Mus musculus (Mouse).